A 242-amino-acid polypeptide reads, in one-letter code: DnaJ homolog subfamily B member 3 (242 aa).

The 69-residue stretch at 1–69 folds into the J domain; it reads MANYYEVLGV…KKRDVYDRYG (69 aa).

As to expression, testis specific.

May operate as a co-chaperone of the male germ cell- and haploid stage-specific Hsp70 proteins. The polypeptide is DnaJ homolog subfamily B member 3 (DNAJB3) (Macaca fuscata fuscata (Japanese macaque)).